The chain runs to 78 residues: uncharacterized protein (78 aa).

The tract at residues 58–78 (EANDPEKKIPSTAAKAISLSP) is disordered.

This is an uncharacterized protein from Vaccinia virus (strain Copenhagen) (VACV).